A 367-amino-acid chain; its full sequence is Germination protease (367 aa).

Positions 1–15 are excised as a propeptide; it reads MKEPLDLSKYSIRTD.

It belongs to the peptidase A25 family. Homotetramer. In terms of processing, autoproteolytically processed. The inactive tetrameric zymogen termed p46 autoprocesses to a smaller form termed p41, which is active only during spore germination.

The catalysed reaction is Endopeptidase action with P4 Glu or Asp, P1 preferably Glu &gt; Asp, P1' hydrophobic and P2' Ala.. In terms of biological role, initiates the rapid degradation of small, acid-soluble proteins during spore germination. This Bacillus cereus (strain B4264) protein is Germination protease.